A 134-amino-acid polypeptide reads, in one-letter code: Cystatin-1 (134 aa).

A signal peptide spans 1-17; that stretch reads MKAIYLILTVLCGFSAS. The Cystatin domain occupies 21–116; that stretch reads GGWRDKDVDD…CTAIIWTRSW (96 aa). The Secondary area of contact signature appears at 65–69; sequence QVVSG. 2 cysteine pairs are disulfide-bonded: cysteine 83–cysteine 96 and cysteine 107–cysteine 127.

Belongs to the cystatin family. Expressed by the venom gland.

It localises to the secreted. In terms of biological role, inhibits various C1 cysteine proteases. This protein has no toxic activity and its function in the venom is unknown. It may play a role as a housekeeping or regulatory protein. In Chilobrachys guangxiensis (Chinese earth tiger tarantula), this protein is Cystatin-1.